The following is a 446-amino-acid chain: Xylose isomerase 1 (446 aa).

Residues His109 and Asp112 contribute to the active site. Mg(2+) contacts are provided by Glu240, Glu276, His279, Asp304, Asp315, Asp317, and Asp347.

It belongs to the xylose isomerase family. Homotetramer. The cofactor is Mg(2+).

It is found in the cytoplasm. It carries out the reaction alpha-D-xylose = alpha-D-xylulofuranose. The chain is Xylose isomerase 1 from Xanthomonas campestris pv. campestris (strain 8004).